The chain runs to 341 residues: Arfaptin-2 (341 aa).

A disordered region spans residues 46-85 (NETSIVSGGYGGSGDGLIPTGSGRHPSHSTTPSGPGDEVA). At Ser72 the chain carries Phosphoserine. Residue Thr76 is modified to Phosphothreonine. Residues 121–321 (TVDLELELQI…NQKQLEQTLQ (201 aa)) form the AH domain.

In terms of assembly, forms homodimers or heterodimers with ARFIP1. Interacts with RAC1. Specifically binds to GTP-bound ARF1 and ARF6, but binds to RAC1.GTP and RAC1.GDP with similar affinities. Interacts with ARL1. Interacts (via N-terminus) with IKBKB and IKBKG; these interactions inhibit activation of NF-kappa-B.

The protein resides in the golgi apparatus. Its subcellular location is the trans-Golgi network membrane. In terms of biological role, plays a role in constitutive metalloproteinase (MMP) secretion from the trans Golgi network. May have important functions during vesicle biogenesis at certain cargo subdomains, which could be predominantly utilized by secreted MMPs, such as MMP7 and MMP2. Also involved in autophagy by regulating the starvation-dependent trafficking of ATG9A vesicles which deliver the phosphatidylinositol 4-kinase beta (PI4KB) to the autophagosome initiation site. Involved in phagophore growth during mitophagy by regulating ATG9A trafficking to mitochondria. In addition, plays a role in NF-kappa-B inhibition by interacting with IKBKB and IKBKG. The chain is Arfaptin-2 from Homo sapiens (Human).